The sequence spans 137 residues: Large ribosomal subunit protein uL16 (137 aa).

The protein belongs to the universal ribosomal protein uL16 family. As to quaternary structure, part of the 50S ribosomal subunit.

In terms of biological role, binds 23S rRNA and is also seen to make contacts with the A and possibly P site tRNAs. This chain is Large ribosomal subunit protein uL16, found in Dinoroseobacter shibae (strain DSM 16493 / NCIMB 14021 / DFL 12).